A 189-amino-acid chain; its full sequence is ECF RNA polymerase sigma-E factor (189 aa).

The tract at residues 1-153 is binds RNAP core; that stretch reads MAEQLTDQAL…TAITLRELEG (153 aa). Residues 25–92 form a sigma-70 factor domain-2 region; sequence LVSRYQNKVA…KNYLTAQGRR (68 aa). The Polymerase core binding motif lies at 48 to 61; the sequence is DVVQESFIKAYRSI. The sigma-70 factor domain-4 stretch occupies residues 129-180; sequence RIVFDTIHNLPEDLKTAITLRELEGLSYEDIAEIMDCPVGTVRSRIFRAREM. The H-T-H motif DNA-binding region spans 156-175; it reads YEDIAEIMDCPVGTVRSRIF.

The protein belongs to the sigma-70 factor family. ECF subfamily. In terms of assembly, interacts transiently with the RNAP catalytic core formed by RpoA, RpoB, RpoC and RpoZ (2 alpha, 1 beta, 1 beta' and 1 omega subunit) to form the RNAP holoenzyme that can initiate transcription. Interacts 1:1 with anti-sigma-E factor RseA which prevents binding to RNAP catalytic core.

Its subcellular location is the cytoplasm. Its activity is regulated as follows. ECF sigma-E is held in an inactive form by its cognate anti-sigma factor (RseA) until released by regulated intramembrane proteolysis (RIP). RIP occurs when an extracytoplasmic signal (periplasmic stress and excess LPS) triggers a concerted proteolytic cascade to transmit information and elicit cellular responses. The anti-sigma factor RseA is an inner membrane protein, binding sigma-E in the cytoplasm and RseB in the periplasm. RseA is first cut extracytoplasmically (site-1 protease, S1P, by DegS), then within the membrane itself (site-2 protease, S2P, by RseP), while cytoplasmic proteases (predominantly ClpX-ClpP) finish degrading the regulatory protein, liberating sigma-E. Degradation of RseA requires 2 signals to activate DegS; an outer membrane protein (OMP) signal activates DegS, while an LPS signal causes release of RseB from RseA, freeing RseA to be cleaved. Sigma factors are initiation factors that promote the attachment of RNA polymerase (RNAP) to specific initiation sites and are then released. Extracytoplasmic function (ECF) sigma-E controls the envelope stress response, responding to periplasmic protein stress, increased levels of periplasmic lipopolysaccharide (LPS) as well as heat shock and oxidative stress; it controls protein processing in the extracytoplasmic compartment. This chain is ECF RNA polymerase sigma-E factor (rpoE), found in Haemophilus influenzae (strain ATCC 51907 / DSM 11121 / KW20 / Rd).